The primary structure comprises 146 residues: Acidic phospholipase A2 C (146 aa).

Residues 1–21 (MNPAHLLILAAVCVSPLGASS) form the signal peptide. Residues 22–27 (NRPMPL) constitute a propeptide that is removed on maturation. 7 cysteine pairs are disulfide-bonded: Cys-38-Cys-98, Cys-53-Cys-145, Cys-55-Cys-71, Cys-70-Cys-126, Cys-77-Cys-119, Cys-87-Cys-112, and Cys-105-Cys-117. Residues Tyr-54, Gly-56, and Gly-58 each coordinate Ca(2+). His-74 is an active-site residue. Asp-75 contributes to the Ca(2+) binding site. Asp-120 is a catalytic residue.

It belongs to the phospholipase A2 family. Group I subfamily. D49 sub-subfamily. The cofactor is Ca(2+). Expressed by the venom gland.

The protein localises to the secreted. It carries out the reaction a 1,2-diacyl-sn-glycero-3-phosphocholine + H2O = a 1-acyl-sn-glycero-3-phosphocholine + a fatty acid + H(+). In terms of biological role, PLA2 catalyzes the calcium-dependent hydrolysis of the 2-acyl groups in 3-sn-phosphoglycerides. The sequence is that of Acidic phospholipase A2 C from Naja sputatrix (Malayan spitting cobra).